The chain runs to 77 residues: Dermaseptin-B9 (77 aa).

The first 22 residues, M1–C22, serve as a signal peptide directing secretion. Propeptides lie at residues E23–E43 and E76–Q77.

This sequence belongs to the frog skin active peptide (FSAP) family. Dermaseptin subfamily. As to expression, expressed by the skin glands.

Its subcellular location is the secreted. Has antimicrobial activity. Exhibits a bactericidal activity towards several species of mollicutes, firmicutes and gracilicutes. This peptide is membranotropic and it efficiently depolarizes the plasma membrane. This is Dermaseptin-B9 (DRG3) from Phyllomedusa bicolor (Two-colored leaf frog).